A 325-amino-acid chain; its full sequence is GMP reductase (325 aa).

Cys-174 (thioimidate intermediate) is an active-site residue. Position 203–226 (203–226) interacts with NADP(+); the sequence is IIADGGIRTHGDIAKSIRFGATMV.

It belongs to the IMPDH/GMPR family. GuaC type 2 subfamily.

The enzyme catalyses IMP + NH4(+) + NADP(+) = GMP + NADPH + 2 H(+). Catalyzes the irreversible NADPH-dependent deamination of GMP to IMP. It functions in the conversion of nucleobase, nucleoside and nucleotide derivatives of G to A nucleotides, and in maintaining the intracellular balance of A and G nucleotides. The sequence is that of GMP reductase from Helicobacter pylori (strain J99 / ATCC 700824) (Campylobacter pylori J99).